Here is a 39-residue protein sequence, read N- to C-terminus: Putative beta-neurotoxin (39 aa).

The segment at 1–39 (GGKEGYPLNSSNGCKSGRFAGTNSNENTECKGXDAENGY) is disordered. Residues 3-39 (KEGYPLNSSNGCKSGRFAGTNSNENTECKGXDAENGY) enclose the LCN-type CS-alpha/beta domain. Residues 28–39 (TECKGXDAENGY) show a composition bias toward basic and acidic residues.

This sequence belongs to the long (4 C-C) scorpion toxin superfamily. Sodium channel inhibitor family. Beta subfamily. Expressed by the venom gland.

It localises to the secreted. In terms of biological role, beta toxins bind voltage-independently at site-4 of sodium channels (Nav) and shift the voltage of activation toward more negative potentials thereby affecting sodium channel activation and promoting spontaneous and repetitive firing. The chain is Putative beta-neurotoxin from Tityus pachyurus (Colombian scorpion).